We begin with the raw amino-acid sequence, 290 residues long: GTPase Era (290 aa).

The 168-residue stretch at 2 to 169 folds into the Era-type G domain; sequence KSGFAAILGR…KNKIYENFSE (168 aa). The tract at residues 10–17 is G1; the sequence is GRPSTGKS. 10 to 17 contacts GTP; sequence GRPSTGKS. Residues 36–40 are G2; that stretch reads QTTRN. Positions 57 to 60 are G3; that stretch reads DTPG. GTP is bound by residues 57–61 and 119–122; these read DTPGF and NKID. The G4 stretch occupies residues 119–122; the sequence is NKID. The tract at residues 148-150 is G5; the sequence is ISA. A KH type-2 domain is found at 200-276; that stretch reads LKEELPYSLY…NLFLQVKLKK (77 aa).

The protein belongs to the TRAFAC class TrmE-Era-EngA-EngB-Septin-like GTPase superfamily. Era GTPase family. Monomer.

The protein localises to the cytoplasm. The protein resides in the cell inner membrane. An essential GTPase that binds both GDP and GTP, with rapid nucleotide exchange. Plays a role in 16S rRNA processing and 30S ribosomal subunit biogenesis and possibly also in cell cycle regulation and energy metabolism. This chain is GTPase Era, found in Borreliella burgdorferi (strain ATCC 35210 / DSM 4680 / CIP 102532 / B31) (Borrelia burgdorferi).